Here is a 107-residue protein sequence, read N- to C-terminus: MMKVLVVVALLVTLISYSSSEGIDDLEADELLSLMANEQTRKECIPKHHECTSDKHGCCRGNFFKYKCQCTTVVTQDGEQTERCFCGTPPHHKAAELVVGFGKKIFG.

An N-terminal signal peptide occupies residues 1-20; sequence MMKVLVVVALLVTLISYSSS. Residues 21 to 41 constitute a propeptide that is removed on maturation; it reads EGIDDLEADELLSLMANEQTR. 4 cysteine pairs are disulfide-bonded: C44–C59, C51–C68, C58–C86, and C70–C84.

The protein belongs to the neurotoxin 19 (CSTX) family. 04 (U1-Lctx) subfamily. As to expression, expressed by the venom gland.

The protein localises to the secreted. This is U1-lycotoxin-Ls1t from Lycosa singoriensis (Wolf spider).